Consider the following 343-residue polypeptide: Anthranilate phosphoribosyltransferase (343 aa).

Residues G84, 87–88 (GD), T92, 94–97 (NIST), 112–120 (KHGNRGVSS), and S124 each bind 5-phospho-alpha-D-ribose 1-diphosphate. G84 is a binding site for anthranilate. S96 is a binding site for Mg(2+). Anthranilate is bound at residue N115. R170 contributes to the anthranilate binding site. Mg(2+)-binding residues include D229 and E230.

This sequence belongs to the anthranilate phosphoribosyltransferase family. In terms of assembly, homodimer. The cofactor is Mg(2+).

It carries out the reaction N-(5-phospho-beta-D-ribosyl)anthranilate + diphosphate = 5-phospho-alpha-D-ribose 1-diphosphate + anthranilate. Its pathway is amino-acid biosynthesis; L-tryptophan biosynthesis; L-tryptophan from chorismate: step 2/5. Catalyzes the transfer of the phosphoribosyl group of 5-phosphorylribose-1-pyrophosphate (PRPP) to anthranilate to yield N-(5'-phosphoribosyl)-anthranilate (PRA). The protein is Anthranilate phosphoribosyltransferase of Burkholderia cenocepacia (strain ATCC BAA-245 / DSM 16553 / LMG 16656 / NCTC 13227 / J2315 / CF5610) (Burkholderia cepacia (strain J2315)).